The sequence spans 238 residues: NAD-dependent protein deacylase (238 aa).

A Deacetylase sirtuin-type domain is found at Met-1–Arg-237. Position 12-31 (Gly-12–Trp-31) interacts with NAD(+). 2 residues coordinate substrate: Tyr-56 and Arg-59. Gln-94–Asp-97 lines the NAD(+) pocket. His-112 serves as the catalytic Proton acceptor. Zn(2+) is bound by residues Cys-120, Cys-123, Cys-139, and Cys-142. NAD(+) is bound by residues Gly-179 to Ser-181, Asn-205 to Glu-207, and Ala-223.

The protein belongs to the sirtuin family. Class III subfamily. Zn(2+) serves as cofactor.

Its subcellular location is the cytoplasm. The enzyme catalyses N(6)-acetyl-L-lysyl-[protein] + NAD(+) + H2O = 2''-O-acetyl-ADP-D-ribose + nicotinamide + L-lysyl-[protein]. The catalysed reaction is N(6)-succinyl-L-lysyl-[protein] + NAD(+) + H2O = 2''-O-succinyl-ADP-D-ribose + nicotinamide + L-lysyl-[protein]. Functionally, NAD-dependent lysine deacetylase and desuccinylase that specifically removes acetyl and succinyl groups on target proteins. Modulates the activities of several proteins which are inactive in their acylated form. This is NAD-dependent protein deacylase from Caulobacter vibrioides (strain ATCC 19089 / CIP 103742 / CB 15) (Caulobacter crescentus).